A 91-amino-acid polypeptide reads, in one-letter code: Class I hydrophobin 3 (91 aa).

Residues 1–17 (MLFRLFTIPSIALGVLG) form the signal peptide. Cystine bridges form between cysteine 31–cysteine 70, cysteine 35–cysteine 61, cysteine 36–cysteine 53, and cysteine 71–cysteine 87.

The protein belongs to the fungal hydrophobin family. As to quaternary structure, self-assembles to form functional amyloid fibrils called rodlets. Self-assembly into fibrillar rodlets occurs spontaneously at hydrophobic:hydrophilic interfaces and the rodlets further associate laterally to form amphipathic monolayers. In terms of tissue distribution, expressed in conidia.

It localises to the secreted. It is found in the cell wall. Functionally, aerial growth, conidiation, and dispersal of filamentous fungi in the environment rely upon a capability of their secreting small amphipathic proteins called hydrophobins (HPBs) with low sequence identity. Class I can self-assemble into an outermost layer of rodlet bundles on aerial cell surfaces, conferring cellular hydrophobicity that supports fungal growth, development and dispersal; whereas Class II form highly ordered films at water-air interfaces through intermolecular interactions but contribute nothing to the rodlet structure. HYD3 is a class I hydrophobin located on the conidial surface that activates specifically the humoral and cellular immunity of Metarhizium acridum's own host insect, Locusta migratoria manilensis (Meyen) but not that of other non-host insects. Improves the resistance of locusts to both specialist and generalist fungal pathogens (wide host range) when topically applied to the cuticle, but has no effect on the fungal resistance of other insects, including Spodoptera frugiperda and Galleria mellonella. The chain is Class I hydrophobin 3 from Metarhizium acridum (strain CQMa 102).